Reading from the N-terminus, the 640-residue chain is MDGFEFFSGRSDVVAMICDDRLLDLSESIPSGKVPEPIELDSPHGLDILRHSCAHVLAQAVQSIYGDAKLGIGPFTENGFYYDFSVNEPFSSDSLRVIEDKMREIVHSDQKFVRKVVDRQSAHSQFRDEPFKLEIINATDDTLSIYYNIDADSGSVRWMDFCRGPHLPSTRFIGDAFALTHVSSVYWRGNSDNPQMQRVYGTAWGSAKDLKGYLDRVELAKLVDHRKLGKELDLFSLPDEIGPGLALFHVKGGIIRSEMEQYARLRHLEEGYNFVYSPHITKRDLFERSGHLQWYGQSMFPPMRLDKDSCSQGFDYYLKPMNCPFHSLVFSSQPRSYRQLPLRLAEFGTVYRYEQSGAIHGLARVRGLTQDDAHIYATRESFEDEVSKALQFTISLLGDYGLDQFYIEISTRDASGKFLGSDEDWAYATHILQKVAQDSGLQTRDDPGGAAFYGPKISVQAKDAIGRYWQMSTIQLDFNLPERFGLFYTDRAGERKRPIMVHRALFGSFERFFAVLTEHYAGAFPPWLSPEQVVALPVTSAHIPYLEEFVSRFSSRLIRARVDYMQDRLPKKIRSYVKEKIPFVLVAGDRDLTNRTVAIRFRDGTQISDLPIQKCFDGICASIDRKKQIQTRIDFDSVLE.

Residues 224–525 (DHRKLGKELD…LTEHYAGAFP (302 aa)) form a catalytic region. Zn(2+)-binding residues include C323, H374, and H502.

It belongs to the class-II aminoacyl-tRNA synthetase family. As to quaternary structure, homodimer. It depends on Zn(2+) as a cofactor.

Its subcellular location is the cytoplasm. It carries out the reaction tRNA(Thr) + L-threonine + ATP = L-threonyl-tRNA(Thr) + AMP + diphosphate + H(+). Its function is as follows. Catalyzes the attachment of threonine to tRNA(Thr) in a two-step reaction: L-threonine is first activated by ATP to form Thr-AMP and then transferred to the acceptor end of tRNA(Thr). Also edits incorrectly charged L-seryl-tRNA(Thr). The polypeptide is Threonine--tRNA ligase (Tropheryma whipplei (strain Twist) (Whipple's bacillus)).